The chain runs to 421 residues: Signal recognition particle receptor FtsY (421 aa).

A compositionally biased stretch (basic residues) spans 1 to 10 (MFSFFRRKKK). A disordered region spans residues 1–31 (MFSFFRRKKKQETPALEEAQIQETAAKAESE). Residues 228-235 (GINGAGKT), 309-313 (DTAGR), and 373-376 (TKLD) contribute to the GTP site.

It belongs to the GTP-binding SRP family. FtsY subfamily. Part of the signal recognition particle protein translocation system, which is composed of SRP and FtsY. SRP is a ribonucleoprotein composed of Ffh and a 4.5S RNA molecule.

The protein resides in the cell inner membrane. It localises to the cytoplasm. The enzyme catalyses GTP + H2O = GDP + phosphate + H(+). Its function is as follows. Involved in targeting and insertion of nascent membrane proteins into the cytoplasmic membrane. Acts as a receptor for the complex formed by the signal recognition particle (SRP) and the ribosome-nascent chain (RNC). Interaction with SRP-RNC leads to the transfer of the RNC complex to the Sec translocase for insertion into the membrane, the hydrolysis of GTP by both Ffh and FtsY, and the dissociation of the SRP-FtsY complex into the individual components. This is Signal recognition particle receptor FtsY from Neisseria meningitidis serogroup A / serotype 4A (strain DSM 15465 / Z2491).